The following is a 475-amino-acid chain: Ribulose bisphosphate carboxylase large chain (475 aa).

A propeptide spanning residues M1–S2 is cleaved from the precursor. P3 carries the N-acetylproline modification. The residue at position 14 (K14) is an N6,N6,N6-trimethyllysine. N123 and T173 together coordinate substrate. Catalysis depends on K175, which acts as the Proton acceptor. A substrate-binding site is contributed by K177. Mg(2+) contacts are provided by K201, D203, and E204. An N6-carboxylysine modification is found at K201. The active-site Proton acceptor is H294. Positions 295, 327, and 379 each coordinate substrate.

The protein belongs to the RuBisCO large chain family. Type I subfamily. As to quaternary structure, heterohexadecamer of 8 large chains and 8 small chains; disulfide-linked. The disulfide link is formed within the large subunit homodimers. It depends on Mg(2+) as a cofactor. The disulfide bond which can form in the large chain dimeric partners within the hexadecamer appears to be associated with oxidative stress and protein turnover.

It localises to the plastid. Its subcellular location is the chloroplast. It carries out the reaction 2 (2R)-3-phosphoglycerate + 2 H(+) = D-ribulose 1,5-bisphosphate + CO2 + H2O. The catalysed reaction is D-ribulose 1,5-bisphosphate + O2 = 2-phosphoglycolate + (2R)-3-phosphoglycerate + 2 H(+). Functionally, ruBisCO catalyzes two reactions: the carboxylation of D-ribulose 1,5-bisphosphate, the primary event in carbon dioxide fixation, as well as the oxidative fragmentation of the pentose substrate in the photorespiration process. Both reactions occur simultaneously and in competition at the same active site. The protein is Ribulose bisphosphate carboxylase large chain of Eucalyptus globulus subsp. globulus (Tasmanian blue gum).